Consider the following 383-residue polypeptide: Chaperone protein DnaJ (383 aa).

The region spanning 5–70 is the J domain; it reads DYYKTLGVTQ…KKRTAYDQYG (66 aa). A CR-type zinc finger spans residues 137 to 215; that stretch reads GTIKEIKIPT…CHGNGRIEIS (79 aa). Residues cysteine 150, cysteine 153, cysteine 167, cysteine 170, cysteine 189, cysteine 192, cysteine 203, and cysteine 206 each coordinate Zn(2+). 4 CXXCXGXG motif repeats span residues 150–157, 167–174, 189–196, and 203–210; these read CPTCYGYG, CPTCRGNG, CPQCHGEG, and CRRCHGNG.

This sequence belongs to the DnaJ family. Homodimer. It depends on Zn(2+) as a cofactor.

Its subcellular location is the cytoplasm. Its function is as follows. Participates actively in the response to hyperosmotic and heat shock by preventing the aggregation of stress-denatured proteins and by disaggregating proteins, also in an autonomous, DnaK-independent fashion. Unfolded proteins bind initially to DnaJ; upon interaction with the DnaJ-bound protein, DnaK hydrolyzes its bound ATP, resulting in the formation of a stable complex. GrpE releases ADP from DnaK; ATP binding to DnaK triggers the release of the substrate protein, thus completing the reaction cycle. Several rounds of ATP-dependent interactions between DnaJ, DnaK and GrpE are required for fully efficient folding. Also involved, together with DnaK and GrpE, in the DNA replication of plasmids through activation of initiation proteins. In Buchnera aphidicola subsp. Baizongia pistaciae (strain Bp), this protein is Chaperone protein DnaJ.